A 1876-amino-acid polypeptide reads, in one-letter code: Phenolphthiocerol/phthiocerol polyketide synthase subunit A (1876 aa).

A Carrier 1 domain is found at 9–83 (ADLRHWLIDY…ALAAYLAAPE (75 aa)). Residue Ser-43 is modified to O-(pantetheine 4'-phosphoryl)serine. The region spanning 101–526 (DEPIAVVGMG…GTNAHVVIEQ (426 aa)) is the Ketosynthase family 3 (KS3) domain. Active-site for beta-ketoacyl synthase activity residues include Cys-273, His-408, and His-448. The tract at residues 624–950 (EGSPGPGTVF…NLNKAHTIHP (327 aa)) is acyltransferase. The For malonyltransferase activity role is filled by Ser-720. The tract at residues 997-1112 (HTTVATVSAS…AQLSSSPSDS (116 aa)) is N-terminal hotdog fold. The region spanning 997–1267 (HTTVATVSAS…YRALDFGLDV (271 aa)) is the PKS/mFAS DH domain. Residue His-1027 is the Proton acceptor; for dehydratase activity of the active site. Residues 1104-1130 (QLSSSPSDSASSLNEHHRANGQPPERA) are disordered. Residues 1106–1115 (SSSPSDSASS) are compositionally biased toward low complexity. The segment at 1130 to 1267 (AHRDLIPDLA…YRALDFGLDV (138 aa)) is C-terminal hotdog fold. Asp-1186 acts as the Proton donor; for dehydratase activity in catalysis. The beta-ketoacyl reductase stretch occupies residues 1491-1728 (AAYLITGGLG…DGYDVAQAVV (238 aa)). An NADP(+)-binding site is contributed by 1492–1551 (AYLITGGLGALGLLMADWLADRGAHRLVLTGRTPLPPRRDWQLDTLDTELRRRIDAIRAL). Residues 1759-1836 (EVRSELEQGL…SLASYLAKRV (78 aa)) enclose the Carrier 2 domain. An O-(pantetheine 4'-phosphoryl)serine modification is found at Ser-1796.

The cofactor is NADP(+). Pantetheine 4'-phosphate serves as cofactor.

It catalyses the reaction icosanoyl-[(phenol)carboxyphthiodiolenone synthase] + 2 (S)-methylmalonyl-CoA + 3 malonyl-CoA + 5 NADPH + 10 H(+) = C32-carboxyphthiodiolenone-[(phenol)carboxyphthiodiolenone synthase] + 5 CO2 + 5 NADP(+) + 5 CoA + 2 H2O. It carries out the reaction docosanoyl-[(phenol)carboxyphthiodiolenone synthase] + 2 (S)-methylmalonyl-CoA + 3 malonyl-CoA + 5 NADPH + 10 H(+) = C34-carboxyphthiodiolenone-[(phenol)carboxyphthiodiolenone synthase] + 5 CO2 + 5 NADP(+) + 5 CoA + 2 H2O. The enzyme catalyses 17-(4-hydroxyphenyl)heptadecanoyl-[(phenol)carboxyphthiodiolenone synthase] + 2 (S)-methylmalonyl-CoA + 3 malonyl-CoA + 5 NADPH + 10 H(+) = C35-(phenol)carboxyphthiodiolenone-[(phenol)carboxyphthiodiolenone synthase] + 5 CO2 + 5 NADP(+) + 5 CoA + 2 H2O. The catalysed reaction is 19-(4-hydroxyphenyl)nonadecanoyl-[(phenol)carboxyphthiodiolenone synthase] + 2 (S)-methylmalonyl-CoA + 3 malonyl-CoA + 5 NADPH + 10 H(+) = C37-(phenol)carboxyphthiodiolenone-[(phenol)carboxyphthiodiolenone synthase] + 5 CO2 + 5 NADP(+) + 5 CoA + 2 H2O. It functions in the pathway lipid metabolism; fatty acid biosynthesis. In terms of biological role, part of the PpsABCDE complex involved in the biosynthesis of the lipid core common to phthiocerols and phenolphthiocerols by successive additions of malonyl-CoA or methylmalonyl-CoA extender units. PpsA can accept as substrate the activated forms of either icosanoyl (C20), docosanoyl (C22) or lignoceroyl (C24) groups from FadD26, or a (4-hydroxyphenyl)-C17 or (4-hydroxyphenyl)-C19 fatty acyl from FadD29. PpsA initiates the biosynthesis and extends its substrate using a malonyl-CoA extender unit. The PpsB and PpsC proteins add the second and third malonyl-CoA extender units. PpsD adds an (R)-methylmalonyl unit and PpsE adds a second (R)-methylmalonyl unit. The incorporation of the methylmalonyl units results in formation of two branched methyl groups in the elongated product. This chain is Phenolphthiocerol/phthiocerol polyketide synthase subunit A (ppsA), found in Mycobacterium bovis (strain ATCC BAA-935 / AF2122/97).